The following is a 98-amino-acid chain: Large ribosomal subunit protein bL28 (98 aa).

This sequence belongs to the bacterial ribosomal protein bL28 family.

The chain is Large ribosomal subunit protein bL28 from Chelativorans sp. (strain BNC1).